Consider the following 389-residue polypeptide: tRNA pseudouridine synthase Pus10 (389 aa).

The Nucleophile role is filled by Asp213. Substrate contacts are provided by Tyr278 and Tyr350.

Belongs to the pseudouridine synthase Pus10 family.

The catalysed reaction is uridine(54) in tRNA = pseudouridine(54) in tRNA. It catalyses the reaction uridine(55) in tRNA = pseudouridine(55) in tRNA. Functionally, responsible for synthesis of pseudouridine from uracil-54 and uracil-55 in the psi GC loop of transfer RNAs. This is tRNA pseudouridine synthase Pus10 from Thermoplasma acidophilum (strain ATCC 25905 / DSM 1728 / JCM 9062 / NBRC 15155 / AMRC-C165).